Here is a 1388-residue protein sequence, read N- to C-terminus: DNA-directed RNA polymerase subunit beta (1388 aa).

The protein belongs to the RNA polymerase beta chain family. In terms of assembly, the RNAP catalytic core consists of 2 alpha, 1 beta, 1 beta' and 1 omega subunit. When a sigma factor is associated with the core the holoenzyme is formed, which can initiate transcription.

The enzyme catalyses RNA(n) + a ribonucleoside 5'-triphosphate = RNA(n+1) + diphosphate. Its function is as follows. DNA-dependent RNA polymerase catalyzes the transcription of DNA into RNA using the four ribonucleoside triphosphates as substrates. This chain is DNA-directed RNA polymerase subunit beta, found in Stenotrophomonas maltophilia (strain K279a).